The chain runs to 169 residues: T-cell receptor gamma chain C region DFL12 (169 aa).

Positions 1–136 (PSDKRLDADI…LQFMSTSAYY (136 aa)) are c region. The chain crosses the membrane as a helical span at residues 137-157 (TYLLLLLKSVIYLAIISFSLL). The Cytoplasmic portion of the chain corresponds to 158–169 (RRTSVCCNEKRS).

It is found in the membrane. In Mus musculus (Mouse), this protein is T-cell receptor gamma chain C region DFL12.